Reading from the N-terminus, the 304-residue chain is Small ribosomal subunit protein uS3 (304 aa).

Positions 17–86 (IDEFFAEELG…DPQVDVQEVD (70 aa)) constitute a KH type-2 domain. Positions 216–304 (LLEGEPEDSE…DEMDEEGDDE (89 aa)) are disordered.

This sequence belongs to the universal ribosomal protein uS3 family. As to quaternary structure, part of the 30S ribosomal subunit.

Binds the lower part of the 30S subunit head. This Haloarcula marismortui (strain ATCC 43049 / DSM 3752 / JCM 8966 / VKM B-1809) (Halobacterium marismortui) protein is Small ribosomal subunit protein uS3.